Here is a 114-residue protein sequence, read N- to C-terminus: Putative toxin HigB3 (114 aa).

It belongs to the mycobacterial HigB family.

Its function is as follows. Putative toxic component of a type II toxin-antitoxin (TA) system. Its cognate antitoxin would be HigA3. Not toxic upon expression in M.smegmatis. The protein is Putative toxin HigB3 of Mycobacterium tuberculosis (strain ATCC 25618 / H37Rv).